Here is a 254-residue protein sequence, read N- to C-terminus: Putative epimerase LsrE (254 aa).

A helical transmembrane segment spans residues 14 to 34 (VALLASYPLSVGILAGQWIAL). A divalent metal cation contacts are provided by histidine 50, aspartate 52, and histidine 81. Aspartate 52 functions as the Proton acceptor in the catalytic mechanism. Substrate-binding positions include histidine 81, 166-169 (GYGS), 199-201 (DGS), and 221-222 (GS). Aspartate 199 contacts a divalent metal cation. Aspartate 199 serves as the catalytic Proton donor.

This sequence belongs to the ribulose-phosphate 3-epimerase family. It depends on a divalent metal cation as a cofactor.

Its subcellular location is the cell membrane. The sequence is that of Putative epimerase LsrE (lsrE) from Salmonella choleraesuis (strain SC-B67).